A 136-amino-acid polypeptide reads, in one-letter code: Blasticidin-S acetyltransferase (136 aa).

In terms of domain architecture, N-acetyltransferase spans 1–136; sequence MLSLPRLQTV…ITSHLLVKEL (136 aa).

Functionally, confers resistance to blasticidin S antibiotic. This chain is Blasticidin-S acetyltransferase (bls), found in Streptomyces morookaense (Streptoverticillium morookaense).